We begin with the raw amino-acid sequence, 353 residues long: UDP-N-acetylglucosamine--N-acetylmuramyl-(pentapeptide) pyrophosphoryl-undecaprenol N-acetylglucosamine transferase (353 aa).

Residues 14–16, Asn126, Arg162, Ser190, Ile243, 262–267, and Gln287 contribute to the UDP-N-acetyl-alpha-D-glucosamine site; these read TGG and ALTVSE.

The protein belongs to the glycosyltransferase 28 family. MurG subfamily.

The protein resides in the cell inner membrane. The catalysed reaction is di-trans,octa-cis-undecaprenyl diphospho-N-acetyl-alpha-D-muramoyl-L-alanyl-D-glutamyl-meso-2,6-diaminopimeloyl-D-alanyl-D-alanine + UDP-N-acetyl-alpha-D-glucosamine = di-trans,octa-cis-undecaprenyl diphospho-[N-acetyl-alpha-D-glucosaminyl-(1-&gt;4)]-N-acetyl-alpha-D-muramoyl-L-alanyl-D-glutamyl-meso-2,6-diaminopimeloyl-D-alanyl-D-alanine + UDP + H(+). It participates in cell wall biogenesis; peptidoglycan biosynthesis. Cell wall formation. Catalyzes the transfer of a GlcNAc subunit on undecaprenyl-pyrophosphoryl-MurNAc-pentapeptide (lipid intermediate I) to form undecaprenyl-pyrophosphoryl-MurNAc-(pentapeptide)GlcNAc (lipid intermediate II). This Vibrio atlanticus (strain LGP32) (Vibrio splendidus (strain Mel32)) protein is UDP-N-acetylglucosamine--N-acetylmuramyl-(pentapeptide) pyrophosphoryl-undecaprenol N-acetylglucosamine transferase.